The chain runs to 96 residues: Small ribosomal subunit protein bS18 (96 aa).

It belongs to the bacterial ribosomal protein bS18 family. As to quaternary structure, part of the 30S ribosomal subunit. Forms a tight heterodimer with protein bS6.

Binds as a heterodimer with protein bS6 to the central domain of the 16S rRNA, where it helps stabilize the platform of the 30S subunit. In Borreliella afzelii (strain PKo) (Borrelia afzelii), this protein is Small ribosomal subunit protein bS18.